The primary structure comprises 171 residues: MHQVISATTNPAKIQAILQAFEEIFGEGSCHITPVAVESGVPEQPFGSEETRAGARNRVDNARRLHPQADFWVAIEAGIDDDATFSWVVIDNGVQRGEARSATLPLPAVILDRVRQGEALGPVMSHYTGIDEIGRKEGAIGVFTAGKLTRSSVYYQAVILALSPFHNAVYR.

Position 8–13 (8–13 (TTNPAK)) interacts with substrate. Mg(2+) contacts are provided by Glu38 and Gln68.

This sequence belongs to the YjjX NTPase family. Homodimer. Requires Mg(2+) as cofactor. The cofactor is Mn(2+).

It catalyses the reaction XTP + H2O = XDP + phosphate + H(+). The catalysed reaction is ITP + H2O = IDP + phosphate + H(+). Functionally, phosphatase that hydrolyzes non-canonical purine nucleotides such as XTP and ITP to their respective diphosphate derivatives. Probably excludes non-canonical purines from DNA/RNA precursor pool, thus preventing their incorporation into DNA/RNA and avoiding chromosomal lesions. The sequence is that of Inosine/xanthosine triphosphatase (yjjX) from Salmonella agona (strain SL483).